The primary structure comprises 353 residues: Photosystem II protein D1 (353 aa).

Threonine 2 carries the post-translational modification N-acetylthreonine. Threonine 2 bears the Phosphothreonine mark. The next 3 helical transmembrane spans lie at 29–46 (YIGW…TATS), 118–133 (HFLL…EWEL), and 142–156 (WIAV…AATA). Position 118 (histidine 118) interacts with chlorophyll a. Tyrosine 126 contributes to the pheophytin a binding site. The [CaMn4O5] cluster site is built by aspartate 170 and glutamate 189. A helical transmembrane segment spans residues 197 to 218 (FHMLGVAGVFGGSLFSAMHGSL). Chlorophyll a is bound at residue histidine 198. A quinone is bound by residues histidine 215 and 264–265 (SF). Histidine 215 contacts Fe cation. Fe cation is bound at residue histidine 272. The helical transmembrane segment at 274–288 (FLAAWPVIGIWFTSL) threads the bilayer. The [CaMn4O5] cluster site is built by histidine 332, glutamate 333, aspartate 342, and alanine 344. Residues 345–353 (AVEAPSTIG) constitute a propeptide that is removed on maturation.

It belongs to the reaction center PufL/M/PsbA/D family. PSII is composed of 1 copy each of membrane proteins PsbA, PsbB, PsbC, PsbD, PsbE, PsbF, PsbH, PsbI, PsbJ, PsbK, PsbL, PsbM, PsbT, PsbX, PsbY, PsbZ, Psb30/Ycf12, at least 3 peripheral proteins of the oxygen-evolving complex and a large number of cofactors. It forms dimeric complexes. Requires The D1/D2 heterodimer binds P680, chlorophylls that are the primary electron donor of PSII, and subsequent electron acceptors. It shares a non-heme iron and each subunit binds pheophytin, quinone, additional chlorophylls, carotenoids and lipids. D1 provides most of the ligands for the Mn4-Ca-O5 cluster of the oxygen-evolving complex (OEC). There is also a Cl(-1) ion associated with D1 and D2, which is required for oxygen evolution. The PSII complex binds additional chlorophylls, carotenoids and specific lipids. as cofactor. In terms of processing, tyr-161 forms a radical intermediate that is referred to as redox-active TyrZ, YZ or Y-Z. Post-translationally, C-terminally processed by CTPA; processing is essential to allow assembly of the oxygen-evolving complex and thus photosynthetic growth.

The protein resides in the plastid. Its subcellular location is the chloroplast thylakoid membrane. The enzyme catalyses 2 a plastoquinone + 4 hnu + 2 H2O = 2 a plastoquinol + O2. In terms of biological role, photosystem II (PSII) is a light-driven water:plastoquinone oxidoreductase that uses light energy to abstract electrons from H(2)O, generating O(2) and a proton gradient subsequently used for ATP formation. It consists of a core antenna complex that captures photons, and an electron transfer chain that converts photonic excitation into a charge separation. The D1/D2 (PsbA/PsbD) reaction center heterodimer binds P680, the primary electron donor of PSII as well as several subsequent electron acceptors. This is Photosystem II protein D1 from Landoltia punctata (Dotted duckmeat).